Here is a 253-residue protein sequence, read N- to C-terminus: Small ribosomal subunit protein cS22 (253 aa).

The transit peptide at 1 to 56 (MATFLTNVVSIKPTIFSFQSESFTPLHTRVNVFSSKPFPSLAGTFSRSSRTRFIPY) directs the protein to the chloroplast. RRM domains follow at residues 76 to 154 (RRVY…ITEK) and 177 to 253 (YKVY…VNKA).

It belongs to the chloroplast-specific ribosomal protein cS22 family. Component of the chloroplast small ribosomal subunit (SSU). Mature 70S chloroplast ribosomes of higher plants consist of a small (30S) and a large (50S) subunit. The 30S small subunit contains 1 molecule of ribosomal RNA (16S rRNA) and 24 different proteins. The 50S large subunit contains 3 rRNA molecules (23S, 5S and 4.5S rRNA) and 33 different proteins. In terms of tissue distribution, expressed constitutively in roots, stems, flower buds, flowers and leaves.

It localises to the plastid. The protein resides in the chloroplast. Functionally, component of the chloroplast ribosome (chloro-ribosome), a dedicated translation machinery responsible for the synthesis of chloroplast genome-encoded proteins, including proteins of the transcription and translation machinery and components of the photosynthetic apparatus. May have a role in the recruitment of stored chloroplast mRNAs for active protein synthesis. Bind single strand DNA (ssDNA) and RNA in vitro. Exhibits RNA chaperone activity. Negatively regulates resistance responses to abiotic stresses during seed germination (e.g. salt, dehydration, and low temperature) and seedling growth (e.g. salt). In Arabidopsis thaliana (Mouse-ear cress), this protein is Small ribosomal subunit protein cS22.